Reading from the N-terminus, the 485-residue chain is Glutamyl-tRNA(Gln) amidotransferase subunit A (485 aa).

Residues Lys-76 and Ser-152 each act as charge relay system in the active site. Ser-176 functions as the Acyl-ester intermediate in the catalytic mechanism.

This sequence belongs to the amidase family. GatA subfamily. Heterotrimer of A, B and C subunits.

It catalyses the reaction L-glutamyl-tRNA(Gln) + L-glutamine + ATP + H2O = L-glutaminyl-tRNA(Gln) + L-glutamate + ADP + phosphate + H(+). Allows the formation of correctly charged Gln-tRNA(Gln) through the transamidation of misacylated Glu-tRNA(Gln) in organisms which lack glutaminyl-tRNA synthetase. The reaction takes place in the presence of glutamine and ATP through an activated gamma-phospho-Glu-tRNA(Gln). This is Glutamyl-tRNA(Gln) amidotransferase subunit A from Dechloromonas aromatica (strain RCB).